A 261-amino-acid chain; its full sequence is Adenosylcobinamide-GDP ribazoletransferase (261 aa).

Transmembrane regions (helical) follow at residues 31 to 51 (YAICFFPLIGAVIGGVFFLTF), 59 to 79 (LGDILIAALLTSIPILISGGI), 125 to 145 (FGMVSVLTLKSSIIIAIFFVV), 183 to 203 (VIYLVITVIGMLLVSPILTVV), and 240 to 260 (LMAGLAVVIAEGVIIYGTGHW).

Belongs to the CobS family. Mg(2+) is required as a cofactor.

It localises to the cell membrane. The catalysed reaction is alpha-ribazole + adenosylcob(III)inamide-GDP = adenosylcob(III)alamin + GMP + H(+). It carries out the reaction alpha-ribazole 5'-phosphate + adenosylcob(III)inamide-GDP = adenosylcob(III)alamin 5'-phosphate + GMP + H(+). It functions in the pathway cofactor biosynthesis; adenosylcobalamin biosynthesis; adenosylcobalamin from cob(II)yrinate a,c-diamide: step 7/7. Functionally, joins adenosylcobinamide-GDP and alpha-ribazole to generate adenosylcobalamin (Ado-cobalamin). Also synthesizes adenosylcobalamin 5'-phosphate from adenosylcobinamide-GDP and alpha-ribazole 5'-phosphate. In Lachnoclostridium phytofermentans (strain ATCC 700394 / DSM 18823 / ISDg) (Clostridium phytofermentans), this protein is Adenosylcobinamide-GDP ribazoletransferase.